A 181-amino-acid chain; its full sequence is ATP-dependent protease subunit HslV (181 aa).

The active site involves Thr-7. Na(+)-binding residues include Ala-165, Cys-168, and Thr-171.

It belongs to the peptidase T1B family. HslV subfamily. A double ring-shaped homohexamer of HslV is capped on each side by a ring-shaped HslU homohexamer. The assembly of the HslU/HslV complex is dependent on binding of ATP.

It is found in the cytoplasm. The enzyme catalyses ATP-dependent cleavage of peptide bonds with broad specificity.. Allosterically activated by HslU binding. Its function is as follows. Protease subunit of a proteasome-like degradation complex believed to be a general protein degrading machinery. The polypeptide is ATP-dependent protease subunit HslV (Lysinibacillus sphaericus (strain C3-41)).